The chain runs to 252 residues: Type III pantothenate kinase (252 aa).

6–13 (DIGNTSTA) lines the ATP pocket. Position 104-107 (104-107 (GADR)) interacts with substrate. Catalysis depends on D106, which acts as the Proton acceptor. D128 lines the K(+) pocket. T131 is a binding site for ATP. T183 is a substrate binding site.

The protein belongs to the type III pantothenate kinase family. Homodimer. The cofactor is NH4(+). K(+) serves as cofactor.

Its subcellular location is the cytoplasm. It carries out the reaction (R)-pantothenate + ATP = (R)-4'-phosphopantothenate + ADP + H(+). It functions in the pathway cofactor biosynthesis; coenzyme A biosynthesis; CoA from (R)-pantothenate: step 1/5. Catalyzes the phosphorylation of pantothenate (Pan), the first step in CoA biosynthesis. The chain is Type III pantothenate kinase from Thermus thermophilus (strain ATCC 27634 / DSM 579 / HB8).